A 195-amino-acid chain; its full sequence is Imidazoleglycerol-phosphate dehydratase (195 aa).

The protein belongs to the imidazoleglycerol-phosphate dehydratase family.

The protein resides in the cytoplasm. The catalysed reaction is D-erythro-1-(imidazol-4-yl)glycerol 3-phosphate = 3-(imidazol-4-yl)-2-oxopropyl phosphate + H2O. It functions in the pathway amino-acid biosynthesis; L-histidine biosynthesis; L-histidine from 5-phospho-alpha-D-ribose 1-diphosphate: step 6/9. This chain is Imidazoleglycerol-phosphate dehydratase, found in Burkholderia multivorans (strain ATCC 17616 / 249).